A 393-amino-acid polypeptide reads, in one-letter code: Zinc-regulated GTPase metalloprotein activator 1 (393 aa).

The psi-PxLVp motif motif lies at 16 to 23 (EDCPELVP). 47 to 54 (GYLGAGKT) contributes to the GTP binding site. 3 residues coordinate Zn(2+): Cys105, Cys107, and Cys108. Positions 105 to 108 (CLCC) match the CXCC motif motif. Residues 108–112 (CSVKD) and 201–204 (NKTD) each bind GTP. Residues 271 to 374 (IVTVTFEVPG…VLQQLFLTAV (104 aa)) form the CobW C-terminal domain.

This sequence belongs to the SIMIBI class G3E GTPase family. ZNG1 subfamily. As to expression, present at high level in the nuclei of the ureteric bud cells in the developing kidneys.

Its subcellular location is the nucleus. It carries out the reaction GTP + H2O = GDP + phosphate + H(+). Zinc chaperone that directly transfers zinc cofactor to target metalloproteins, thereby activating them. Catalyzes zinc insertion into the active site of methionine aminopeptidase METAP1, which function to cleave the initiator methionine from polypeptides during or after protein translation. Mechanistically, the N-terminal psi-PxLVp motif binds to the C6H2-type zinc finger of inactive form of METAP1. After formation of the docked complex, zinc is transferred from the CXCC motif in the GTPase domain of ZNG1 to the zinc binding site in the peptidase domain of METAP1 in a process requiring GTP hydrolysis. GTP/GDP exchange is required for release of active METAP1. This chain is Zinc-regulated GTPase metalloprotein activator 1 (Zng1), found in Mus musculus (Mouse).